We begin with the raw amino-acid sequence, 57 residues long: Large ribosomal subunit protein bL32 (57 aa).

A compositionally biased stretch (basic residues) spans M1 to Q19. Residues M1–W20 are disordered.

It belongs to the bacterial ribosomal protein bL32 family.

This chain is Large ribosomal subunit protein bL32, found in Mycobacterium leprae (strain Br4923).